A 194-amino-acid polypeptide reads, in one-letter code: MGVRNIERLIEQRIKENPINPDILNLEEKVVEIRRTTRVMEGGRRFSFSTLAIVGDRNGHVGFGHGKAREVPPSIAKAIADAKKRIIKVALIEGTVPHDVYGEYDSAVVLLKPARRGTGVVAGGPMRPVLELLGVTDVLAKIVGRTTNPNAVVRATFDALLKLKSPEEVAKVRGLEEEKIKSVYRIYAGGVPVR.

An S5 DRBM domain is found at 26-89 (LEEKVVEIRR…ADAKKRIIKV (64 aa)).

This sequence belongs to the universal ribosomal protein uS5 family. Part of the 30S ribosomal subunit. Contacts proteins S4 and S8.

Its function is as follows. With S4 and S12 plays an important role in translational accuracy. Functionally, located at the back of the 30S subunit body where it stabilizes the conformation of the head with respect to the body. This is Small ribosomal subunit protein uS5 from Sulfurihydrogenibium sp. (strain YO3AOP1).